Here is a 366-residue protein sequence, read N- to C-terminus: MELAEIRNELEKTAQQIKDFRGSLDLDSMEVRIAELEDQMLDPNFWNDQQAAQKVINESNGYKETYQAFHALEEEQESMEISLELLKEEADEDLQAELEKDIKAYVATISEFELKLMLSDPYDKNNAILELHPGAGGTESQDWGSMLLRMYQRWSEKKGFKVEMLDYQAGDEAGIKSVTLLIKGHNAYGYLKAEKGVHRLVRISPFDSSGRRHTSFVSVDVMPELDDEIEIEVRTEDLKIDTYRATGAGGQHINTTDSAVRMTHIPSGIVVTCQSERSQLKNREQAMKMLKTKLYQKEQEEKERELAEIRGEQKEIGWGSQIRSYVFHPYSMVKDHRTNYETGNIQAVMDGDLDDFINAYLRSRIG.

An N5-methylglutamine modification is found at Gln-251.

This sequence belongs to the prokaryotic/mitochondrial release factor family. Post-translationally, methylated by PrmC. Methylation increases the termination efficiency of RF2.

Its subcellular location is the cytoplasm. Its function is as follows. Peptide chain release factor 2 directs the termination of translation in response to the peptide chain termination codons UGA and UAA. This is Peptide chain release factor 2 (prfB) from Listeria innocua serovar 6a (strain ATCC BAA-680 / CLIP 11262).